We begin with the raw amino-acid sequence, 178 residues long: Interleukin-10 (178 aa).

The N-terminal stretch at methionine 1–alanine 18 is a signal peptide. Disulfide bonds link cysteine 30–cysteine 126 and cysteine 80–cysteine 132. The N-linked (GlcNAc...) asparagine glycan is linked to asparagine 134.

It belongs to the IL-10 family. As to quaternary structure, homodimer. Interacts with IL10RA and IL10RB.

It is found in the secreted. In terms of biological role, major immune regulatory cytokine that acts on many cells of the immune system where it has profound anti-inflammatory functions, limiting excessive tissue disruption caused by inflammation. Mechanistically, IL10 binds to its heterotetrameric receptor comprising IL10RA and IL10RB leading to JAK1 and STAT2-mediated phosphorylation of STAT3. In turn, STAT3 translocates to the nucleus where it drives expression of anti-inflammatory mediators. Targets antigen-presenting cells (APCs) such as macrophages and monocytes and inhibits their release of pro-inflammatory cytokines including granulocyte-macrophage colony-stimulating factor /GM-CSF, granulocyte colony-stimulating factor/G-CSF, IL-1 alpha, IL-1 beta, IL-6, IL-8 and TNF-alpha. Also interferes with antigen presentation by reducing the expression of MHC-class II and co-stimulatory molecules, thereby inhibiting their ability to induce T cell activation. In addition, controls the inflammatory response of macrophages by reprogramming essential metabolic pathways including mTOR signaling. In Bos taurus (Bovine), this protein is Interleukin-10 (IL10).